A 278-amino-acid chain; its full sequence is MCRRPDCGFSFSPGPVILLWCCLLLPIVSSAAVSVAPTATEKVPAECPELTRRCLLGEVFQGDKYESWLRPLVNVTGRDGPLSQLIRYRPVTPEAANSVLLDEAFLDTLALLYNNPDQLRALLTLLSSDTAPRWMTVMRGYSECGDGSPAVYTCVDDLCRGYDLTRLSYERSIFTEHVLGFELVPPSLFNVVVAIRNEATRTNRAVRLPVSTAAAPEGITLFYGLYNAVKEFCLRHQLDPPLLRHLDKYYAGLPPELKQTRVNLPAHSRYGPQAVDAR.

Residues 1–30 form the signal peptide; it reads MCRRPDCGFSFSPGPVILLWCCLLLPIVSS. Residues 43–256 enclose the gL betaherpesvirus-type domain; that stretch reads VPAECPELTR…DKYYAGLPPE (214 aa). A disulfide bond links Cys154 and Cys159.

The protein belongs to the herpesviridae glycoprotein L (gL) family. Betaherpesvirinae gL subfamily. Interacts with glycoprotein H (gH); this interaction is necessary for the correct processing and cell surface expression of gH. Forms the envelope pentamer complex (PC) composed of gH, gL, UL128, UL130, and UL131A. The pentamer interacts with host NRP2. Forms the envelope trimer complex composed of gH, gL, and gO. The trimer interacts with host PDGFRA.

Its subcellular location is the virion membrane. It localises to the host cell membrane. The protein localises to the host Golgi apparatus. The protein resides in the host trans-Golgi network. In terms of biological role, the heterodimer glycoprotein H-glycoprotein L is required for the fusion of viral and plasma membranes leading to virus entry into the host cell. Acts as a functional inhibitor of gH and maintains gH in an inhibited form. Upon binding to host integrins, gL dissociates from gH leading to activation of the viral fusion glycoproteins gB and gH. In human cytomegalovirus, forms two distincts complexes to mediate viral entry, a trimer and a pentamer at the surface of the virion envelope. The gH-gL-gO trimer is required for infection in fibroblasts by interacting with host PDGFRA. The gH-gL-UL128-UL130-UL131A pentamer is essential for viral entry in epithelial, endothelial and myeloid cells via interaction with host NRP2. The chain is Envelope glycoprotein L from Human cytomegalovirus (strain PT) (HHV-5).